We begin with the raw amino-acid sequence, 316 residues long: Ribose-phosphate pyrophosphokinase (316 aa).

ATP-binding positions include 39–41 (DGE) and 98–99 (RQ). Mg(2+) is bound by residues His-133 and Asp-172. The active site involves Lys-195. Residues Arg-197, Asp-221, and 225-229 (DTANT) each bind D-ribose 5-phosphate.

This sequence belongs to the ribose-phosphate pyrophosphokinase family. Class I subfamily. Homohexamer. Requires Mg(2+) as cofactor.

It is found in the cytoplasm. The catalysed reaction is D-ribose 5-phosphate + ATP = 5-phospho-alpha-D-ribose 1-diphosphate + AMP + H(+). It functions in the pathway metabolic intermediate biosynthesis; 5-phospho-alpha-D-ribose 1-diphosphate biosynthesis; 5-phospho-alpha-D-ribose 1-diphosphate from D-ribose 5-phosphate (route I): step 1/1. Its function is as follows. Involved in the biosynthesis of the central metabolite phospho-alpha-D-ribosyl-1-pyrophosphate (PRPP) via the transfer of pyrophosphoryl group from ATP to 1-hydroxyl of ribose-5-phosphate (Rib-5-P). The protein is Ribose-phosphate pyrophosphokinase of Nitrosomonas europaea (strain ATCC 19718 / CIP 103999 / KCTC 2705 / NBRC 14298).